Here is a 234-residue protein sequence, read N- to C-terminus: Synaptogyrin-1 (234 aa).

Met-1 is subject to N-acetylmethionine. The Cytoplasmic segment spans residues 1-23 (MEGGAYGAGKAGGAFDPYTLVRQ). The region spanning 20–173 (LVRQPHTILR…QAVLAFQRYQ (154 aa)) is the MARVEL domain. The chain crosses the membrane as a helical span at residues 24-44 (PHTILRVVSWVFSIVVFGSIV). Over 45–71 (NEGYLNNPEEEEEFCIYNRNPNACSYG) the chain is Lumenal. The helical transmembrane segment at 72 to 92 (VTVGVLAFLTCLLYLALDVYF) threads the bilayer. Residues 93 to 103 (PQISSVKDRKK) lie on the Cytoplasmic side of the membrane. Residues 104 to 124 (AVLSDIGVSAFWAFFWFVGFC) traverse the membrane as a helical segment. The Lumenal portion of the chain corresponds to 125-148 (FLANQWQVSKPKDNPLNEGTDAAR). A helical transmembrane segment spans residues 149–169 (AAIAFSFFSIFTWAGQAVLAF). Residues 170–234 (QRYQIGADSA…EPQGYQSQGY (65 aa)) are Cytoplasmic-facing. Residues 201–234 (EPSAGSDPAGMGGTYQHPANAFDAEPQGYQSQGY) form a disordered region.

The protein belongs to the synaptogyrin family.

The protein localises to the cytoplasmic vesicle. Its subcellular location is the secretory vesicle. The protein resides in the synaptic vesicle membrane. It is found in the melanosome. Its function is as follows. May play a role in regulated exocytosis. Modulates the localization of synaptophysin/SYP into synaptic-like microvesicles and may therefore play a role in synaptic-like microvesicle formation and/or maturation. Involved in the regulation of short-term and long-term synaptic plasticity. In Mus musculus (Mouse), this protein is Synaptogyrin-1.